The primary structure comprises 207 residues: Homeobox protein BarH-like 1 (207 aa).

The segment at residues 95–154 is a DNA-binding region (homeobox); that stretch reads GRRSRTVFTELQLMGLEKRFEKQKYLSTPDRIDLAESLGLSQLQVKTWYQNRRMKWKKIV. Positions 157 to 207 are disordered; it reads GGGLESPTKPKGRPKKNSIPSSEQLSEQERAKETEKPPESPGEPSERQQEE. A compositionally biased stretch (basic and acidic residues) spans 183-207; it reads EQERAKETEKPPESPGEPSERQQEE.

It belongs to the BAR homeobox family. As to expression, expressed predominantly in the facial primordia, developing stomach, and proximal limbs.

It is found in the nucleus. Transcription factor, which is involved in craniofacial development, in odontogenic region definition, and in stomach organogenesis. Binds to a regulatory module of the NCAM promoter. In Gallus gallus (Chicken), this protein is Homeobox protein BarH-like 1 (BARX1).